A 209-amino-acid chain; its full sequence is Orotate phosphoribosyltransferase (209 aa).

5-phospho-alpha-D-ribose 1-diphosphate-binding positions include Arg-96, Lys-100, His-102, and 122 to 130; that span reads EDLISTGGS. Ser-126 contributes to the orotate binding site.

Belongs to the purine/pyrimidine phosphoribosyltransferase family. PyrE subfamily. As to quaternary structure, homodimer. It depends on Mg(2+) as a cofactor.

The enzyme catalyses orotidine 5'-phosphate + diphosphate = orotate + 5-phospho-alpha-D-ribose 1-diphosphate. It functions in the pathway pyrimidine metabolism; UMP biosynthesis via de novo pathway; UMP from orotate: step 1/2. In terms of biological role, catalyzes the transfer of a ribosyl phosphate group from 5-phosphoribose 1-diphosphate to orotate, leading to the formation of orotidine monophosphate (OMP). The polypeptide is Orotate phosphoribosyltransferase (Lactococcus lactis subsp. cremoris (strain SK11)).